The following is a 67-amino-acid chain: DNA-directed RNA polymerase subunit omega (67 aa).

The protein belongs to the RNA polymerase subunit omega family. In terms of assembly, the RNAP catalytic core consists of 2 alpha, 1 beta, 1 beta' and 1 omega subunit. When a sigma factor is associated with the core the holoenzyme is formed, which can initiate transcription.

The enzyme catalyses RNA(n) + a ribonucleoside 5'-triphosphate = RNA(n+1) + diphosphate. Functionally, promotes RNA polymerase assembly. Latches the N- and C-terminal regions of the beta' subunit thereby facilitating its interaction with the beta and alpha subunits. In Variovorax paradoxus (strain S110), this protein is DNA-directed RNA polymerase subunit omega.